The following is a 242-amino-acid chain: Mediator of RNA polymerase II transcription subunit 19-A (242 aa).

Residues 1 to 15 show a composition bias toward polar residues; the sequence is MTEIFSTLFGQNDAQ. 2 disordered regions span residues 1-33 and 171-242; these read MTEI…PPPS and PPKK…NSLR. Positions 171–184 are enriched in basic residues; the sequence is PPKKKSKHKHRHHH. Basic and acidic residues predominate over residues 193–210; the sequence is TRTDPTKKKKKKDNEPER. A compositionally biased stretch (basic residues) spans 211 to 223; that stretch reads RKKKKDKKKKKNR. The segment covering 232 to 242 has biased composition (polar residues); it reads TGSQPNSNSLR.

The protein belongs to the Mediator complex subunit 19 family. In terms of assembly, component of the Mediator complex.

The protein resides in the nucleus. Functionally, component of the Mediator complex, a coactivator involved in the regulated transcription of nearly all RNA polymerase II-dependent genes. Mediator functions as a bridge to convey information from gene-specific regulatory proteins to the basal RNA polymerase II transcription machinery. Mediator is recruited to promoters by direct interactions with regulatory proteins and serves as a scaffold for the assembly of a functional preinitiation complex with RNA polymerase II and the general transcription factors. This chain is Mediator of RNA polymerase II transcription subunit 19-A (med19a), found in Danio rerio (Zebrafish).